Here is a 211-residue protein sequence, read N- to C-terminus: Peptidyl-tRNA hydrolase (211 aa).

TRNA is bound at residue Tyr-17. His-22 acts as the Proton acceptor in catalysis. The tRNA site is built by Phe-79, Asn-81, and Asn-127.

The protein belongs to the PTH family. In terms of assembly, monomer.

The protein localises to the cytoplasm. The enzyme catalyses an N-acyl-L-alpha-aminoacyl-tRNA + H2O = an N-acyl-L-amino acid + a tRNA + H(+). Its function is as follows. Hydrolyzes ribosome-free peptidyl-tRNAs (with 1 or more amino acids incorporated), which drop off the ribosome during protein synthesis, or as a result of ribosome stalling. In terms of biological role, catalyzes the release of premature peptidyl moieties from peptidyl-tRNA molecules trapped in stalled 50S ribosomal subunits, and thus maintains levels of free tRNAs and 50S ribosomes. In Solidesulfovibrio magneticus (strain ATCC 700980 / DSM 13731 / RS-1) (Desulfovibrio magneticus), this protein is Peptidyl-tRNA hydrolase.